Here is a 162-residue protein sequence, read N- to C-terminus: Interleukin-15 (162 aa).

Residues 1-29 (MRILKPYLRSTSIQCYLCLLLNSHFLTEA) form the signal peptide. The propeptide occupies 30–48 (GIHVFILGCISAGLPKTEA). Disulfide bonds link Cys83–Cys133 and Cys90–Cys136. Residues Asn113, Asn121, and Asn127 are each glycosylated (N-linked (GlcNAc...) asparagine).

It belongs to the IL-15/IL-21 family.

Its subcellular location is the secreted. Its function is as follows. Cytokine that plays a major role in the development of inflammatory and protective immune responses to microbial invaders and parasites by modulating immune cells of both the innate and adaptive immune systems. Stimulates the proliferation of natural killer cells, T-cells and B-cells and promotes the secretion of several cytokines. In monocytes, induces the production of IL8 and monocyte chemotactic protein 1/CCL2, two chemokines that attract neutrophils and monocytes respectively to sites of infection. Unlike most cytokines, which are secreted in soluble form, IL15 is expressed in association with its high affinity IL15RA on the surface of IL15-producing cells and delivers signals to target cells that express IL2RB and IL2RG receptor subunits. Binding to its receptor triggers the phosphorylation of JAK1 and JAK3 and the recruitment and subsequent phosphorylation of signal transducer and activator of transcription-3/STAT3 and STAT5. In mast cells, induces the rapid tyrosine phosphorylation of STAT6 and thereby controls mast cell survival and release of cytokines such as IL4. The chain is Interleukin-15 (IL15) from Ovis aries (Sheep).